A 91-amino-acid chain; its full sequence is Insertion element IS1 7 protein InsA (91 aa).

This sequence belongs to the IS1 elements InsA family.

Absolutely required for transposition of IS1. The chain is Insertion element IS1 7 protein InsA (insA7) from Escherichia coli (strain K12).